The primary structure comprises 383 residues: Phospho-N-acetylmuramoyl-pentapeptide-transferase (383 aa).

9 helical membrane passes run 26–46 (TAGA…GVIE), 73–93 (TMGG…WAEL), 98–118 (IILL…DDFL), 131–151 (IYKI…LYYF), 182–202 (IFLP…IPFA), 221–241 (GLAI…SYVS), 258–278 (AGEV…FLWF), 283–305 (AQVF…IALF), and 360–380 (QVVF…IATL).

This sequence belongs to the glycosyltransferase 4 family. MraY subfamily. Mg(2+) serves as cofactor.

Its subcellular location is the cell inner membrane. The enzyme catalyses UDP-N-acetyl-alpha-D-muramoyl-L-alanyl-gamma-D-glutamyl-meso-2,6-diaminopimeloyl-D-alanyl-D-alanine + di-trans,octa-cis-undecaprenyl phosphate = di-trans,octa-cis-undecaprenyl diphospho-N-acetyl-alpha-D-muramoyl-L-alanyl-D-glutamyl-meso-2,6-diaminopimeloyl-D-alanyl-D-alanine + UMP. It participates in cell wall biogenesis; peptidoglycan biosynthesis. Its function is as follows. Catalyzes the initial step of the lipid cycle reactions in the biosynthesis of the cell wall peptidoglycan: transfers peptidoglycan precursor phospho-MurNAc-pentapeptide from UDP-MurNAc-pentapeptide onto the lipid carrier undecaprenyl phosphate, yielding undecaprenyl-pyrophosphoryl-MurNAc-pentapeptide, known as lipid I. In Brachyspira hyodysenteriae (strain ATCC 49526 / WA1), this protein is Phospho-N-acetylmuramoyl-pentapeptide-transferase.